Consider the following 166-residue polypeptide: Protein-export protein SecB (166 aa).

The protein belongs to the SecB family. In terms of assembly, homotetramer, a dimer of dimers. One homotetramer interacts with 1 SecA dimer.

It localises to the cytoplasm. Its function is as follows. One of the proteins required for the normal export of preproteins out of the cell cytoplasm. It is a molecular chaperone that binds to a subset of precursor proteins, maintaining them in a translocation-competent state. It also specifically binds to its receptor SecA. This Acidiphilium cryptum (strain JF-5) protein is Protein-export protein SecB.